Reading from the N-terminus, the 264-residue chain is Sulfur carrier protein FdhD (264 aa).

Cysteine 107 acts as the Cysteine persulfide intermediate in catalysis.

It belongs to the FdhD family.

Its subcellular location is the cytoplasm. Required for formate dehydrogenase (FDH) activity. Acts as a sulfur carrier protein that transfers sulfur from IscS to the molybdenum cofactor prior to its insertion into FDH. The sequence is that of Sulfur carrier protein FdhD from Staphylococcus haemolyticus (strain JCSC1435).